The primary structure comprises 153 residues: Large ribosomal subunit protein uL15 (153 aa).

Positions 21-41 (RGIGSGKGKTGGRGIKGQKSR) are disordered. Positions 23 to 35 (IGSGKGKTGGRGI) are enriched in gly residues.

Belongs to the universal ribosomal protein uL15 family. In terms of assembly, part of the 50S ribosomal subunit.

Functionally, binds to the 23S rRNA. The chain is Large ribosomal subunit protein uL15 from Rickettsia massiliae (strain Mtu5).